The primary structure comprises 270 residues: 5'-AMP-activated protein kinase subunit beta-1 (270 aa).

The segment at 1 to 43 is disordered; sequence MGNTSSERAALERHGGHKTPRRDSSGGTKDGDRPKILMDSPED. G2 carries the N-myristoyl glycine lipid modification. T4 carries the post-translational modification Phosphothreonine. Phosphoserine is present on residues S5 and S6. A Phosphothreonine modification is found at T19. Residues 21–36 show a composition bias toward basic and acidic residues; the sequence is RRDSSGGTKDGDRPKI. Phosphoserine; by autocatalysis occurs at positions 24 and 25. A phosphoserine mark is found at S40, S96, S101, and S108. Residues 68-163 form a glycogen-binding domain region; that stretch reads EVNDKAPAQA…QVKKTDFEVF (96 aa). T148 is modified (phosphothreonine). At S182 the chain carries Phosphoserine.

Belongs to the 5'-AMP-activated protein kinase beta subunit family. In terms of assembly, AMPK is a heterotrimer of an alpha catalytic subunit (PRKAA1 or PRKAA2), a beta (PRKAB1 or PRKAB2) and a gamma non-catalytic subunits (PRKAG1, PRKAG2 or PRKAG3). Interacts with FNIP1 and FNIP2. Post-translationally, phosphorylated when associated with the catalytic subunit (PRKAA1 or PRKAA2). Phosphorylated by ULK1; leading to negatively regulate AMPK activity and suggesting the existence of a regulatory feedback loop between ULK1 and AMPK.

In terms of biological role, non-catalytic subunit of AMP-activated protein kinase (AMPK), an energy sensor protein kinase that plays a key role in regulating cellular energy metabolism. In response to reduction of intracellular ATP levels, AMPK activates energy-producing pathways and inhibits energy-consuming processes: inhibits protein, carbohydrate and lipid biosynthesis, as well as cell growth and proliferation. AMPK acts via direct phosphorylation of metabolic enzymes, and by longer-term effects via phosphorylation of transcription regulators. Also acts as a regulator of cellular polarity by remodeling the actin cytoskeleton; probably by indirectly activating myosin. Beta non-catalytic subunit acts as a scaffold on which the AMPK complex assembles, via its C-terminus that bridges alpha (PRKAA1 or PRKAA2) and gamma subunits (PRKAG1, PRKAG2 or PRKAG3). This is 5'-AMP-activated protein kinase subunit beta-1 (PRKAB1) from Homo sapiens (Human).